Here is a 179-residue protein sequence, read N- to C-terminus: ATP synthase subunit delta (179 aa).

It belongs to the ATPase delta chain family. F-type ATPases have 2 components, F(1) - the catalytic core - and F(0) - the membrane proton channel. F(1) has five subunits: alpha(3), beta(3), gamma(1), delta(1), epsilon(1). F(0) has three main subunits: a(1), b(2) and c(10-14). The alpha and beta chains form an alternating ring which encloses part of the gamma chain. F(1) is attached to F(0) by a central stalk formed by the gamma and epsilon chains, while a peripheral stalk is formed by the delta and b chains.

The protein localises to the cell membrane. Functionally, f(1)F(0) ATP synthase produces ATP from ADP in the presence of a proton or sodium gradient. F-type ATPases consist of two structural domains, F(1) containing the extramembraneous catalytic core and F(0) containing the membrane proton channel, linked together by a central stalk and a peripheral stalk. During catalysis, ATP synthesis in the catalytic domain of F(1) is coupled via a rotary mechanism of the central stalk subunits to proton translocation. Its function is as follows. This protein is part of the stalk that links CF(0) to CF(1). It either transmits conformational changes from CF(0) to CF(1) or is implicated in proton conduction. The protein is ATP synthase subunit delta of Clostridium perfringens (strain SM101 / Type A).